Consider the following 263-residue polypeptide: MWDPAVYLAFADHRGRPFYDLVSRIGAKRARRVVDLGCGPGNLTRYLARRWPEAIIEAWDSSPQMVAAARERGIDATTGDLRTWKPKPDTDVVISSAALHWVPEHADLMVQWATVLPHGSWIAVQVPGNFETPSHAVVRALARREPYAKLVRDIPFRVGAVVGSPASYAGLLMDAGCKVDAWDPTYLHQLTGKNPVLEWITGTALVPVRERFDDVSWEQFRQELIPLLDDAYPPRSDGTTMFPFRRLFIVAEVGGARRSADVS.

It belongs to the methyltransferase superfamily. Tam family.

The protein resides in the cytoplasm. The enzyme catalyses trans-aconitate + S-adenosyl-L-methionine = (E)-3-(methoxycarbonyl)pent-2-enedioate + S-adenosyl-L-homocysteine. Catalyzes the S-adenosylmethionine monomethyl esterification of trans-aconitate. The sequence is that of Trans-aconitate 2-methyltransferase from Mycobacterium ulcerans (strain Agy99).